A 374-amino-acid polypeptide reads, in one-letter code: Putative glutamate--cysteine ligase 2 (374 aa).

The protein belongs to the glutamate--cysteine ligase type 2 family. YbdK subfamily.

The enzyme catalyses L-cysteine + L-glutamate + ATP = gamma-L-glutamyl-L-cysteine + ADP + phosphate + H(+). In terms of biological role, ATP-dependent carboxylate-amine ligase which exhibits weak glutamate--cysteine ligase activity. The sequence is that of Putative glutamate--cysteine ligase 2 from Leptothrix cholodnii (strain ATCC 51168 / LMG 8142 / SP-6) (Leptothrix discophora (strain SP-6)).